Reading from the N-terminus, the 234-residue chain is Glucosamine-6-phosphate deaminase (234 aa).

The Proton acceptor; for enolization step role is filled by Asp62. Catalysis depends on Asn128, which acts as the For ring-opening step. His130 functions as the Proton acceptor; for ring-opening step in the catalytic mechanism. Residue Glu135 is the For ring-opening step of the active site.

This sequence belongs to the glucosamine/galactosamine-6-phosphate isomerase family. NagB subfamily.

The enzyme catalyses alpha-D-glucosamine 6-phosphate + H2O = beta-D-fructose 6-phosphate + NH4(+). The protein operates within amino-sugar metabolism; N-acetylneuraminate degradation; D-fructose 6-phosphate from N-acetylneuraminate: step 5/5. In terms of biological role, catalyzes the reversible isomerization-deamination of glucosamine 6-phosphate (GlcN6P) to form fructose 6-phosphate (Fru6P) and ammonium ion. In Streptococcus pyogenes serotype M18 (strain MGAS8232), this protein is Glucosamine-6-phosphate deaminase.